The following is a 336-amino-acid chain: Ornithine carbamoyltransferase, catabolic (336 aa).

Residues 57 to 60 (STRT), glutamine 84, arginine 108, and 135 to 138 (HPTQ) each bind carbamoyl phosphate. L-ornithine is bound by residues asparagine 168, aspartate 232, and 236-237 (SM). Carbamoyl phosphate contacts are provided by residues 274–275 (CL) and arginine 321.

The protein belongs to the aspartate/ornithine carbamoyltransferase superfamily. OTCase family.

It is found in the cytoplasm. The catalysed reaction is carbamoyl phosphate + L-ornithine = L-citrulline + phosphate + H(+). The protein operates within amino-acid degradation; L-arginine degradation via ADI pathway; carbamoyl phosphate from L-arginine: step 2/2. Reversibly catalyzes the transfer of the carbamoyl group from carbamoyl phosphate (CP) to the N(epsilon) atom of ornithine (ORN) to produce L-citrulline. This is Ornithine carbamoyltransferase, catabolic from Burkholderia pseudomallei (strain K96243).